We begin with the raw amino-acid sequence, 230 residues long: 5'-methylthioadenosine/S-adenosylhomocysteine nucleosidase (230 aa).

Residue glutamate 12 is the Proton acceptor of the active site. Substrate contacts are provided by residues glycine 78, isoleucine 153, and 174 to 175 (ME). Aspartate 198 functions as the Proton donor in the catalytic mechanism.

It belongs to the PNP/UDP phosphorylase family. MtnN subfamily.

It catalyses the reaction S-adenosyl-L-homocysteine + H2O = S-(5-deoxy-D-ribos-5-yl)-L-homocysteine + adenine. It carries out the reaction S-methyl-5'-thioadenosine + H2O = 5-(methylsulfanyl)-D-ribose + adenine. The enzyme catalyses 5'-deoxyadenosine + H2O = 5-deoxy-D-ribose + adenine. The protein operates within amino-acid biosynthesis; L-methionine biosynthesis via salvage pathway; S-methyl-5-thio-alpha-D-ribose 1-phosphate from S-methyl-5'-thioadenosine (hydrolase route): step 1/2. In terms of biological role, catalyzes the irreversible cleavage of the glycosidic bond in both 5'-methylthioadenosine (MTA) and S-adenosylhomocysteine (SAH/AdoHcy) to adenine and the corresponding thioribose, 5'-methylthioribose and S-ribosylhomocysteine, respectively. Also cleaves 5'-deoxyadenosine, a toxic by-product of radical S-adenosylmethionine (SAM) enzymes, into 5-deoxyribose and adenine. The chain is 5'-methylthioadenosine/S-adenosylhomocysteine nucleosidase from Shewanella pealeana (strain ATCC 700345 / ANG-SQ1).